The sequence spans 1567 residues: Ice nucleation protein (1567 aa).

Low complexity predominate over residues 130-185 (PAAEPSAPATQATSATLPTPATPSTQATPSTQSTQSTQSTEATQSTEATPVATVAA). 13 disordered regions span residues 130-195 (PAAE…QQHD), 270-329 (YGST…KGSD), 356-378 (AGSE…GSDV), 449-474 (TQTS…GSDI), 502-529 (SESS…YGST), 594-620 (QTAG…DVTA), 642-668 (QTSG…DVTA), 689-716 (TQTS…DVTA), 738-764 (QTSG…DVTA), 785-810 (TQTS…GSDI), 833-860 (TQTS…DVTA), 929-959 (TQTS…AGYG), and 977-1004 (TQTS…DVTA). Residues 270–282 (YGSTQTAQEGSRL) show a composition bias toward polar residues. A compositionally biased stretch (low complexity) spans 283–296 (TSGYGSTATSGSDS). 4 stretches are compositionally biased toward polar residues: residues 302–325 (YGST…QTAR), 356–373 (AGSE…QTAR), 449–469 (TQTS…QTAR), and 502–519 (SESS…AQQD). Residues 520 to 529 (SSLTTGYGST) show a composition bias toward low complexity. Composition is skewed to polar residues over residues 594-613 (QTAG…QTAR), 642-661 (QTSG…QTAR), 689-709 (TQTS…QTAR), 738-757 (QTSG…QTAR), 785-805 (TQTS…QTAR), 833-853 (TQTS…QTAR), 929-949 (TQTS…QTAR), and 977-997 (TQTS…QTAR).

Belongs to the bacterial ice nucleation protein family.

It localises to the cell outer membrane. Its function is as follows. Ice nucleation proteins enable bacteria to nucleate crystallization in supercooled water. The polypeptide is Ice nucleation protein (inaX) (Xanthomonas campestris pv. translucens).